The chain runs to 540 residues: Probable LRR receptor-like serine/threonine-protein kinase RPK1 (540 aa).

Residues 1–19 form the signal peptide; the sequence is MKLLGLVFLLFNLFMFSFS. Over 20 to 198 the chain is Extracellular; sequence RKLLTESGGG…PGKSGLYPIE (179 aa). LRR repeat units follow at residues 118–142 and 144–169; these read LSEIRVLSLSFNDLRGEIPKEIWGL and KLEILDLKGNNFIGGIRVVDNVVLRK. A helical transmembrane segment spans residues 199–219; that stretch reads IASIVSASVIVFVLLVLVILF. The Cytoplasmic portion of the chain corresponds to 220–540; the sequence is IYTRKWKRNS…LLKRIQPSRL (321 aa). A phosphothreonine mark is found at T250 and T258. Residues 261-535 form the Protein kinase domain; the sequence is FSNSNCIGHG…KQAVRLLKRI (275 aa). Residues 267 to 275 and K289 each bind ATP; that span reads IGHGGFGST. Y334 and Y372 each carry phosphotyrosine. D385 (proton acceptor) is an active-site residue. At Y427 the chain carries Phosphotyrosine. T435 carries the post-translational modification Phosphothreonine.

It belongs to the protein kinase superfamily. Ser/Thr protein kinase family. As to expression, expressed in roots, stems, leaves, and flowers.

The protein localises to the cell membrane. The enzyme catalyses L-seryl-[protein] + ATP = O-phospho-L-seryl-[protein] + ADP + H(+). It catalyses the reaction L-threonyl-[protein] + ATP = O-phospho-L-threonyl-[protein] + ADP + H(+). Its function is as follows. Involved in the main abscisic acid-mediated (ABA) signaling pathway and in early ABA perception. Together with RPK2, required for pattern formation along the radial axis (e.g. the apical embryonic domain cell types that generate cotyledon primordia), and the apical-basal axis (e.g. differentiation of the basal pole during early embryogenesis). The polypeptide is Probable LRR receptor-like serine/threonine-protein kinase RPK1 (RPK1) (Arabidopsis thaliana (Mouse-ear cress)).